The sequence spans 1714 residues: Intersectin-1 (1714 aa).

The region spanning 21 to 109 (ERAKHDQQFL…PVMKQQPVAI (89 aa)) is the EH 1 domain. In terms of domain architecture, EF-hand 1 spans 53 to 88 (LPQPVLAQIWALADMNNDGRMDQVEFSIAMKLIKLK). Ca(2+)-binding residues include Asp-66, Asn-68, Asp-70, Arg-72, and Glu-77. Ser-203 bears the Phosphoserine mark. Positions 221–310 (SRLKYRQLFN…PEYIPPSFRR (90 aa)) constitute an EH 2 domain. The 36-residue stretch at 254-289 (LPQAQLASIWNLSDIDQDGKLTAEEFILAMHLIDVA) folds into the EF-hand 2 domain. Residues Asp-267, Asp-269, Asp-271, Lys-273, and Glu-278 each contribute to the Ca(2+) site. Residues 310–325 (RVRSGSGMSVISSSSV) show a composition bias toward low complexity. 2 disordered regions span residues 310 to 356 (RVRS…KREN) and 614 to 706 (SKQQ…QSRL). Phosphoserine is present on residues Ser-318, Ser-334, and Ser-335. The tract at residues 326–702 (DQRLPEEPSS…ERAKPEMQDK (377 aa)) is KLERQ. Basic and acidic residues-rich tracts occupy residues 340 to 356 (QPEK…KREN) and 622 to 706 (RSLE…QSRL). Residues 354 to 658 (RENFERGSVE…QRRVQERDKQ (305 aa)) adopt a coiled-coil conformation. Ser-685 carries the phosphoserine modification. The SH3 1 domain occupies 738 to 799 (VKVVYYRALY…PANYAEKIPE (62 aa)). The tract at residues 827–863 (APLPVTSSEPSTTPNNWADFSSTWPSSSNEKPETDNW) is disordered. The segment covering 831 to 855 (VTSSEPSTTPNNWADFSSTWPSSSN) has biased composition (polar residues). The residue at position 890 (Thr-890) is a Phosphothreonine. A phosphoserine mark is found at Ser-894, Ser-895, and Ser-897. An SH3 2 domain is found at 906 to 964 (VEGLQAQALYPWRAKKDNHLNFNKSDVITVLEQQDMWWFGEVQGQKGWFPKSYVKLISG). Ser-971 is subject to Phosphoserine. Thr-977 carries the phosphothreonine modification. Phosphoserine is present on residues Ser-979 and Ser-988. SH3 domains are found at residues 995–1053 (IPGE…LKDS) and 1067–1131 (KKPE…LLSP). A required for interaction with FCHSD2 region spans residues 1067-1131 (KKPEIAQVIA…PANYVKLLSP (65 aa)). The short motif at 1097-1120 (RKKNPGGWWEGELQARGKKRQIGW) is the Bipartite nuclear localization signal; in isoform 2 element. Ser-1130 is subject to Phosphoserine. Thr-1137 is subject to Phosphothreonine. Positions 1148-1207 (PAVCQVIGMYDYTAQNDDELAFSKGQIINVLNKEDPDWWKGEVSGQVGLFPSNYVKLTTD) constitute an SH3 5 domain. Residues 1230-1416 (KRQGYIHELI…EELCSQVNEG (187 aa)) form the DH domain. One can recognise a PH domain in the interval 1455-1564 (KFLHSGKLYK…WVQKIKAASE (110 aa)). Residues 1572-1688 (KKREKAYLVR…KKDQGSKGPV (117 aa)) form the C2 domain. At Ser-1638 the chain carries Phosphoserine. Residues Asp-1660, Ser-1663, and Asp-1666 each contribute to the Ca(2+) site.

Interacts (via DH domain) with CDC42. Interacts (via SH3 domain 1) with WASL. Interacts with dynamin, SNAP25 and SNAP23. Interacts with clathrin-associated proteins and other components of the endocytic machinery, such as SPIN90, EPS15, EPN1, EPN2, STON2, FCHO1, FCHO2 and DAB2. Interacts (via SH3 domains) with REPS1 and SGIP1. Interacts with ARHGAP31. Interacts with ADAM15. Interacts with PRRT2. Interacts (via SH3 domain 4) with FCHSD2 (via SH3 domain 2). Interacts (via SH3 domain 1) with DENND2B. Interacts (via SH3 domains) with CBL. Isoform 2: Interacts with CBL and DNM1. Isoform 2: Interacts with LMNA. Isoform 2: Interacts with importin subunit KPNA1; this is likely to mediate its import into the nucleus. Interacts with DNM2. It depends on Ca(2+) as a cofactor. As to expression, detected in brain, adrenal gland and heart. Detected in neurons at the calyx of Held (at protein level). Isoform 1: Primarily detected in brain neurons. Isoform 2: Primarily detected in glia (at protein level). Widely expressed. Expressed at high levels in brain, heart and skeletal muscle.

It localises to the endomembrane system. The protein localises to the synapse. Its subcellular location is the synaptosome. The protein resides in the cell projection. It is found in the lamellipodium. It localises to the cell membrane. The protein localises to the membrane. Its subcellular location is the clathrin-coated pit. The protein resides in the recycling endosome. It is found in the endosome. It localises to the cytoplasmic vesicle. The protein localises to the cytoplasm. Its subcellular location is the nucleus envelope. Its function is as follows. Adapter protein that provides a link between the endocytic membrane traffic and the actin assembly machinery. Acts as a guanine nucleotide exchange factor (GEF) for CDC42, and thereby stimulates actin nucleation mediated by WASL and the ARP2/3 complex. Plays a role in the assembly and maturation of clathrin-coated vesicles. Recruits FCHSD2 to clathrin-coated pits. Involved in endocytosis of activated EGFR, and probably also other growth factor receptors. Involved in endocytosis of integrin beta-1 (ITGB1) and transferrin receptor (TFR); internalization of ITGB1 as DAB2-dependent cargo but not TFR may involve association with DAB2. Promotes ubiquitination and subsequent degradation of EGFR, and thereby contributes to the down-regulation of EGFR-dependent signaling pathways. In chromaffin cells, required for normal exocytosis of catecholamines. Required for rapid replenishment of release-ready synaptic vesicles at presynaptic active zones. Inhibits ARHGAP31 activity toward RAC1. Functionally, plays a role in synaptic vesicle endocytosis in brain neurons. This chain is Intersectin-1, found in Mus musculus (Mouse).